Here is a 329-residue protein sequence, read N- to C-terminus: Lipoyl synthase (329 aa).

Residues Cys-72, Cys-77, Cys-83, Cys-98, Cys-102, Cys-105, and Ser-313 each coordinate [4Fe-4S] cluster. Positions 83-303 (CWSHGTATIM…QIGLKKGFFE (221 aa)) constitute a Radical SAM core domain.

This sequence belongs to the radical SAM superfamily. Lipoyl synthase family. [4Fe-4S] cluster is required as a cofactor.

The protein localises to the cytoplasm. It catalyses the reaction [[Fe-S] cluster scaffold protein carrying a second [4Fe-4S](2+) cluster] + N(6)-octanoyl-L-lysyl-[protein] + 2 oxidized [2Fe-2S]-[ferredoxin] + 2 S-adenosyl-L-methionine + 4 H(+) = [[Fe-S] cluster scaffold protein] + N(6)-[(R)-dihydrolipoyl]-L-lysyl-[protein] + 4 Fe(3+) + 2 hydrogen sulfide + 2 5'-deoxyadenosine + 2 L-methionine + 2 reduced [2Fe-2S]-[ferredoxin]. The protein operates within protein modification; protein lipoylation via endogenous pathway; protein N(6)-(lipoyl)lysine from octanoyl-[acyl-carrier-protein]: step 2/2. In terms of biological role, catalyzes the radical-mediated insertion of two sulfur atoms into the C-6 and C-8 positions of the octanoyl moiety bound to the lipoyl domains of lipoate-dependent enzymes, thereby converting the octanoylated domains into lipoylated derivatives. The polypeptide is Lipoyl synthase (Legionella pneumophila (strain Corby)).